Consider the following 212-residue polypeptide: Nitric oxide synthase (212 aa).

Residue Y11 coordinates heme b. The segment at 30–50 is calmodulin-binding; that stretch reads KKRAIGFKKLAKAVKFSTKLM. One can recognise a Flavodoxin-like domain in the interval 60–212; sequence ATILYATETG…AVDTLLEELG (153 aa). The tract at residues 155–175 is disordered; it reads SYSDSRKSSSDEPEHKDNFES. The span at 158-173 shows a compositional bias: basic and acidic residues; sequence DSRKSSSDEPEHKDNF. 186 to 212 is an FMN binding site; sequence AFGLGSRAYPHFCAFARAVDTLLEELG.

It belongs to the NOS family. Heme b is required as a cofactor. Requires FAD as cofactor. The cofactor is FMN.

It carries out the reaction 2 L-arginine + 3 NADPH + 4 O2 + H(+) = 2 L-citrulline + 2 nitric oxide + 3 NADP(+) + 4 H2O. Its function is as follows. Produces nitric oxide (NO) which is a messenger molecule with diverse functions throughout the body. The polypeptide is Nitric oxide synthase (Squalus acanthias (Spiny dogfish)).